A 509-amino-acid chain; its full sequence is Ankyrin repeat domain-containing protein 13C (509 aa).

Residues 1 to 19 are compositionally biased toward basic and acidic residues; that stretch reads MTGEKIRSLHRDQKPSKDE. Positions 1–42 are disordered; that stretch reads MTGEKIRSLHRDQKPSKDEDLLEPDEEATAGGTFTRTGKLKN. ANK repeat units follow at residues 79–110, 111–140, and 144–173; these read DAYFPVHECVFKGDIRRLSSLIRSHSIGQKDN, HGNTPLHLAVMLGNKECAHLLLAHNAPVKV, and QGWSPLAEAISYGDRQMITALLRKLKQQSR.

It is found in the endoplasmic reticulum membrane. In terms of biological role, acts as a molecular chaperone for G protein-coupled receptors, regulating their biogenesis and exit from the ER. In Xenopus tropicalis (Western clawed frog), this protein is Ankyrin repeat domain-containing protein 13C (ankrd13c).